Reading from the N-terminus, the 376-residue chain is PCM7-4 (376 aa).

Functionally, has antibacterial activity against Listeria monocytogenes. This chain is PCM7-4, found in Bacillus velezensis.